The chain runs to 1528 residues: Rho GTPase-activating protein 7 (1528 aa).

Disordered stretches follow at residues 72–94 (DFPG…HEGE), 288–310 (MSAE…PPKV), and 372–436 (ALST…TKPK). The segment covering 81–94 (LSKDVDENDSHEGE) has biased composition (basic and acidic residues). Positions 374–384 (STSSSPSGTPT) are enriched in low complexity. Polar residues predominate over residues 396-436 (GSESGADTISVNQTRVNLSSDTESTDLPSSTPVANSGTKPK). The region spanning 448–515 (KAEIEAKEAC…LNKCAVMKLE (68 aa)) is the SAM domain. S523, S526, and S566 each carry phosphoserine. Disordered stretches follow at residues 558–617 (PKQD…ATPR), 732–764 (RSVS…RTRS), 829–876 (PSGN…SSRL), and 928–990 (SDEG…GVGA). Composition is skewed to low complexity over residues 591–605 (VSSV…SLPS) and 734–760 (VSNS…SPVT). A focal adhesion-targeting (FAT) region spans residues 710 to 884 (QLNCVEISAL…RLSIYDNVPG (175 aa)). A Phosphoserine modification is found at S757. A compositionally biased stretch (basic and acidic residues) spans 851–862 (LRRENSSDSPKE). The span at 936–948 (ALDSVSPCPSSPK) shows a compositional bias: polar residues. Over residues 950–960 (IHLDVDNDRTT) the composition is skewed to basic and acidic residues. Residues 961-972 (PSDLDSTGNSLN) show a composition bias toward polar residues. Positions 1051 to 1073 (KHGFSWAVPKFMKRIKVPDYKDR) are polybasic cluster (PBR). The Rho-GAP domain maps to 1078–1284 (VPLTVNVQRT…HMIAECKKLF (207 aa)). The START domain maps to 1314–1521 (GNDDSADYQH…RDSFSNQNTE (208 aa)).

In terms of assembly, interacts with EF1A1, facilitates EF1A1 distribution to the membrane periphery and ruffles upon growth factor stimulation and suppresses cell migration. Interacts with tensin TNS1 (via N-terminus); the interaction is decreased by phosphorylation of TNS1. Interacts with TNS3 and PTEN; in resting cells, interacts with TNS3 (via C2 tensin-type domain) but, following growth factor stimulation, TNS3 and PTEN are phosphorylated which leads to weakened interaction with TNS3 and enhanced interaction with PTEN. Interacts (via C-terminus) with tensin TNS4 (via SH2 domain); the interaction is independent of tyrosine phosphorylation of DLC1. In terms of tissue distribution, highest level of expression in the spleen, with rather lower levels in prostate, testis, ovary, small intestine and colon, but none in the thymus.

It is found in the cytoplasm. It localises to the cell junction. Its subcellular location is the focal adhesion. The protein resides in the membrane. Functionally, functions as a GTPase-activating protein for the small GTPases RHOA, RHOB, RHOC and CDC42, terminating their downstream signaling. This induces morphological changes and detachment through cytoskeletal reorganization, playing a critical role in biological processes such as cell migration and proliferation. Also functions in vivo as an activator of the phospholipase PLCD1. Active DLC1 increases cell migration velocity but reduces directionality. Required for growth factor-induced epithelial cell migration; in resting cells, interacts with TNS3 while PTEN interacts with the p85 regulatory subunit of the PI3K kinase complex but growth factor stimulation induces phosphorylation of TNS3 and PTEN, causing them to change their binding preference so that PTEN interacts with DLC1 and TNS3 interacts with p85. The PTEN-DLC1 complex translocates to the posterior of migrating cells to activate RHOA while the TNS3-p85 complex translocates to the leading edge of migrating cells to promote RAC1 activation. This is Rho GTPase-activating protein 7 (DLC1) from Homo sapiens (Human).